We begin with the raw amino-acid sequence, 23 residues long: Mu-conotoxin-like SxIIIB (23 aa).

At Q1 the chain carries Pyrrolidone carboxylic acid. 3 disulfides stabilise this stretch: C3–C16, C4–C21, and C11–C22. A23 is modified (alanine amide).

This sequence belongs to the conotoxin M superfamily. As to expression, expressed by the venom duct.

It localises to the secreted. Its function is as follows. Mu-conotoxins block voltage-gated sodium channels (Nav). In Conus striolatus (Cone snail), this protein is Mu-conotoxin-like SxIIIB.